Reading from the N-terminus, the 206-residue chain is Urease accessory protein UreG (206 aa).

Residue 13-20 (GPVGSGKT) participates in GTP binding.

Belongs to the SIMIBI class G3E GTPase family. UreG subfamily. In terms of assembly, homodimer. UreD, UreF and UreG form a complex that acts as a GTP-hydrolysis-dependent molecular chaperone, activating the urease apoprotein by helping to assemble the nickel containing metallocenter of UreC. The UreE protein probably delivers the nickel.

The protein resides in the cytoplasm. Facilitates the functional incorporation of the urease nickel metallocenter. This process requires GTP hydrolysis, probably effectuated by UreG. The chain is Urease accessory protein UreG from Haloquadratum walsbyi (strain DSM 16790 / HBSQ001).